The primary structure comprises 179 residues: MARLKEIYWKEIAPKLKEELKLSNVMEVPRVTKITLNMGLGEAVGDKKVIEHAVADLEKITGQKVVVTYARKSIAGFKVREGWPIGVKVTLRRERMYEFLDRLLSISLPRVRDFRGLNAKSFDGRGNYSMGVKEQIIFPEIDYDKIDALRGLDITLTTTAKNDDEGRALLRAFKFPFRN.

Belongs to the universal ribosomal protein uL5 family. As to quaternary structure, part of the 50S ribosomal subunit; part of the 5S rRNA/L5/L18/L25 subcomplex. Contacts the 5S rRNA and the P site tRNA. Forms a bridge to the 30S subunit in the 70S ribosome.

Its function is as follows. This is one of the proteins that bind and probably mediate the attachment of the 5S RNA into the large ribosomal subunit, where it forms part of the central protuberance. In the 70S ribosome it contacts protein S13 of the 30S subunit (bridge B1b), connecting the 2 subunits; this bridge is implicated in subunit movement. Contacts the P site tRNA; the 5S rRNA and some of its associated proteins might help stabilize positioning of ribosome-bound tRNAs. The protein is Large ribosomal subunit protein uL5 of Pseudomonas fluorescens (strain SBW25).